We begin with the raw amino-acid sequence, 80 residues long: Anaphase-promoting complex subunit hcn1 (80 aa).

Met1 bears the N-acetylmethionine mark. The disordered stretch occupies residues 26-54 (QTLDSESTTEEALQKNEESTRLSPEKKKI). Over residues 37 to 54 (ALQKNEESTRLSPEKKKI) the composition is skewed to basic and acidic residues.

In terms of assembly, the APC/C is composed of at least 13 subunits: apc1, apc2, nuc2, apc4, apc5, cut9, apc8, apc10, apc11, hcn1, apc13, apc14 and apc15. Interacts directly (via N-terminus) with cut9.

Its function is as follows. Component of the anaphase promoting complex/cyclosome (APC/C), a cell cycle-regulated E3 ubiquitin-protein ligase complex that controls progression through mitosis and the G1 phase of the cell cycle. The APC/C is thought to confer substrate specificity and, in the presence of ubiquitin-conjugating E2 enzymes, it catalyzes the formation of protein-ubiquitin conjugates that are subsequently degraded by the 26S proteasome. Has a role in assembling cut9 in the 20S APC/cyclosome. The sequence is that of Anaphase-promoting complex subunit hcn1 (hcn1) from Schizosaccharomyces pombe (strain 972 / ATCC 24843) (Fission yeast).